The primary structure comprises 302 residues: MPSKEIDINQKKNVLPKPEDIQLIICDVDGTLLGPDHKPHPRNLRALKYLRENYPQLPFVLATGRQRTSVGNIREALGLHVFPCVHLNGCVVYDKGEIVACAALKNSLAIDIIDKLKDIQTCALFGYDEDYVYQIKQESDKKQHGIKFLRLCGETVKDDANEMLPQLKGPKDIFNKMVVFDDDTNGLEEAKKRLAGIPSDEVALTQALPQTFEIIPPNDNKGVALKNILSKIYPSISLENVLAFGDGANDVCMFELAGYSVAIRSGMPVALKAAKAISDVSSAEGAVGEVLERIYNIPPDFN.

Belongs to the HAD-like hydrolase superfamily.

Its subcellular location is the cytoplasm. It is found in the nucleus. This is an uncharacterized protein from Schizosaccharomyces pombe (strain 972 / ATCC 24843) (Fission yeast).